The chain runs to 424 residues: Histidine--tRNA ligase (424 aa).

It belongs to the class-II aminoacyl-tRNA synthetase family. Homodimer.

It localises to the cytoplasm. It catalyses the reaction tRNA(His) + L-histidine + ATP = L-histidyl-tRNA(His) + AMP + diphosphate + H(+). The chain is Histidine--tRNA ligase from Salmonella paratyphi A (strain ATCC 9150 / SARB42).